The sequence spans 327 residues: Movement protein (327 aa).

Residues 252 to 311 (DLTREEREKAAQLEMLRKTREVHTQRSAEEMKRRQAELAKDTQRKLAEEAKAVTEKRKNM) adopt a coiled-coil conformation. 2 disordered regions span residues 271-294 (REVH…KDTQ) and 307-327 (KRKN…FDSV). Residues 313-327 (GVNSSNIKFGNFDSV) show a composition bias toward polar residues.

It is found in the host cell wall. The protein localises to the host cytoplasm. Its function is as follows. Transports viral genome to neighboring plant cells directly through plasmosdesmata, without any budding. The movement protein allows efficient cell to cell propagation, by bypassing the host cell wall barrier. The sequence is that of Movement protein from Hordeum vulgare (Barley).